The sequence spans 223 residues: UPF0502 protein Avin_04790 (223 aa).

The protein belongs to the UPF0502 family.

This Azotobacter vinelandii (strain DJ / ATCC BAA-1303) protein is UPF0502 protein Avin_04790.